Consider the following 371-residue polypeptide: F-box protein At2g26850 (371 aa).

Residues 59–105 (KMSILDLPDLPLDCILELLPPSELCTMARVCSSLRERCVSDHLWEKH) form the F-box domain.

This chain is F-box protein At2g26850, found in Arabidopsis thaliana (Mouse-ear cress).